The sequence spans 201 residues: Nuclear protein UL4 (201 aa).

It belongs to the alphaherpesvirinae HHV-1 UL4 family.

The protein localises to the host nucleus. The chain is Nuclear protein UL4 from Human herpesvirus 2 (strain HG52) (HHV-2).